The primary structure comprises 657 residues: Broad substrate specificity ATP-binding cassette transporter ABCG2 (657 aa).

The interval Met-1 to Ser-25 is disordered. Residues Met-1–Ser-395 lie on the Cytoplasmic side of the membrane. One can recognise an ABC transporter domain in the interval Val-48–Pro-285. Residues Gly-79 to Ser-86, Arg-183 to Glu-189, Glu-210, and His-242 contribute to the ATP site. Residues Leu-389–Leu-653 enclose the ABC transmembrane type-2 domain. The helical transmembrane segment at Val-396–Leu-416 threads the bilayer. At Lys-417–Gly-428 the chain is on the extracellular side. The chain crosses the membrane as a helical span at residues Val-429–Val-449. Residues Val-450–Asp-477 lie on the Cytoplasmic side of the membrane. Residues Leu-478–Gly-498 traverse the membrane as a helical segment. The Extracellular portion of the chain corresponds to Leu-499–Phe-506. Residues Phe-507–Ile-527 traverse the membrane as a helical segment. The Cytoplasmic portion of the chain corresponds to Ala-528 to Ser-535. A helical transmembrane segment spans residues Val-536–Val-556. The Extracellular segment spans residues Asn-557–His-632. Cys-592 and Cys-610 form a disulfide bridge. Asn-596 and Asn-600 each carry an N-linked (GlcNAc...) asparagine glycan. Residues Val-633 to Leu-653 form a helical membrane-spanning segment. At Lys-654–Ser-657 the chain is on the cytoplasmic side.

It belongs to the ABC transporter superfamily. ABCG family. Eye pigment precursor importer (TC 3.A.1.204) subfamily. As to quaternary structure, homodimer; disulfide-linked. The minimal functional unit is a homodimer, but the major oligomeric form in plasma membrane is a homotetramer with possibility of higher order oligomerization up to homododecamers. In terms of processing, N-glycosylated in brain capillary, kidney and small intestine but not in heart. Post-translationally, N-glycosylated. Glycosylation-deficient ABCG2 is normally expressed and functional. Phosphorylated. Phosphorylation may regulate the localization to the plasma membrane, the homooligomerization and therefore, the activity of the transporter. In terms of tissue distribution, highly expressed in brain capillary, kidney and small intestine. Lower expression in heart. Preferentially expressed (at protein level) on the luminal membrane of brain capillaries, in kidney and small intestine.

The protein resides in the cell membrane. It localises to the apical cell membrane. It is found in the mitochondrion membrane. The catalysed reaction is ATP + H2O + xenobioticSide 1 = ADP + phosphate + xenobioticSide 2.. The enzyme catalyses urate(in) + ATP + H2O = urate(out) + ADP + phosphate + H(+). It carries out the reaction indoxyl sulfate(in) + ATP + H2O = indoxyl sulfate(out) + ADP + phosphate + H(+). It catalyses the reaction sphing-4-enine 1-phosphate(in) + ATP + H2O = sphing-4-enine 1-phosphate(out) + ADP + phosphate + H(+). The catalysed reaction is estrone 3-sulfate(in) + ATP + H2O = estrone 3-sulfate(out) + ADP + phosphate + H(+). The enzyme catalyses dehydroepiandrosterone 3-sulfate(in) + ATP + H2O = dehydroepiandrosterone 3-sulfate(out) + ADP + phosphate + H(+). It carries out the reaction 4-methylumbelliferone sulfate(in) + ATP + H2O = 4-methylumbelliferone sulfate(out) + ADP + phosphate + H(+). It catalyses the reaction 5,7-dimethyl-2-methylamino-4-(3-pyridylmethyl)-1,3-benzothiazol-6-yl beta-D-glucuronate(in) + ATP + H2O = 5,7-dimethyl-2-methylamino-4-(3-pyridylmethyl)-1,3-benzothiazol-6-yl beta-D-glucuronate(out) + ADP + phosphate + H(+). The catalysed reaction is 4-methylumbelliferone beta-D-glucuronate(in) + ATP + H2O = 4-methylumbelliferone beta-D-glucuronate(out) + ADP + phosphate + H(+). The enzyme catalyses 5,7-dimethyl-2-methylamino-4-(3-pyridylmethyl)-1,3-benzothiazol-6-yl sulfate(in) + ATP + H2O = 5,7-dimethyl-2-methylamino-4-(3-pyridylmethyl)-1,3-benzothiazol-6-yl sulfate(out) + ADP + phosphate + H(+). It carries out the reaction 17beta-estradiol 17-O-(beta-D-glucuronate)(in) + ATP + H2O = 17beta-estradiol 17-O-(beta-D-glucuronate)(out) + ADP + phosphate + H(+). It catalyses the reaction methotrexate(in) + ATP + H2O = methotrexate(out) + ADP + phosphate + H(+). The catalysed reaction is riboflavin(in) + ATP + H2O = riboflavin(out) + ADP + phosphate + H(+). The enzyme catalyses pheophorbide a(in) + ATP + H2O = pheophorbide a(out) + ADP + phosphate + H(+). It carries out the reaction itaconate(in) + ATP + H2O = itaconate(out) + ADP + phosphate + H(+). Its function is as follows. Broad substrate specificity ATP-dependent transporter of the ATP-binding cassette (ABC) family that actively extrudes a wide variety of physiological compounds, dietary toxins and xenobiotics from cells. Involved in porphyrin homeostasis, mediating the export of protoporphyrin IX (PPIX) from both mitochondria to cytosol and cytosol to extracellular space, it also functions in the cellular export of heme. Also mediates the efflux of sphingosine-1-P from cells. Acts as a urate exporter functioning in both renal and extrarenal urate excretion. In kidney, it also functions as a physiological exporter of the uremic toxin indoxyl sulfate. Also involved in the excretion of steroids like estrone 3-sulfate/E1S, 3beta-sulfooxy-androst-5-en-17-one/DHEAS, and other sulfate conjugates. Mediates the secretion of the riboflavin and biotin vitamins into milk. Extrudes pheophorbide a, a phototoxic porphyrin catabolite of chlorophyll, reducing its bioavailability. Plays an important role in the exclusion of xenobiotics from the brain. It confers to cells a resistance to multiple drugs and other xenobiotics including mitoxantrone, pheophorbide, camptothecin, methotrexate, azidothymidine, and the anthracyclines daunorubicin and doxorubicin, through the control of their efflux. In placenta, it limits the penetration of drugs from the maternal plasma into the fetus. May play a role in early stem cell self-renewal by blocking differentiation. In inflammatory macrophages, exports itaconate from the cytosol to the extracellular compartment and limits the activation of TFEB-dependent lysosome biogenesis involved in antibacterial innate immune response. The protein is Broad substrate specificity ATP-binding cassette transporter ABCG2 (Abcg2) of Rattus norvegicus (Rat).